The sequence spans 375 residues: Glycogen synthase kinase-3 homolog YGK3 (375 aa).

A Protein kinase domain is found at 41–329 (VREGKRIGHG…ARQLMAHEFF (289 aa)). Residues 47–55 (IGHGSFGTV) and Lys-74 each bind ATP. The active-site Proton acceptor is Asp-173. Ser-211 is subject to Phosphoserine.

The protein belongs to the protein kinase superfamily. Ser/Thr protein kinase family.

It catalyses the reaction L-seryl-[protein] + ATP = O-phospho-L-seryl-[protein] + ADP + H(+). It carries out the reaction L-threonyl-[protein] + ATP = O-phospho-L-threonyl-[protein] + ADP + H(+). Functionally, required for heat stress-instigated phosphorylation of BCY1 which is involved in cell wall integrity signaling. Regulates activity of MSN2, a transcription factor that binds to the stress-response element (STRE). Probably promotes formation of a complex between MSN2 and DNA. Regulates the stability of ROG1. The sequence is that of Glycogen synthase kinase-3 homolog YGK3 (YGK3) from Saccharomyces cerevisiae (strain ATCC 204508 / S288c) (Baker's yeast).